The following is a 1837-amino-acid chain: Nucleoporin nup211 (1837 aa).

Coiled coils occupy residues 59 to 378, 415 to 519, and 559 to 625; these read EVNY…YDEI, YKQK…ELDL, and VFRN…QLRY. Thr-650 carries the phosphothreonine modification. Coiled-coil stretches lie at residues 661-1163, 1222-1637, and 1675-1712; these read EQTS…NKLL, LDNR…ENTH, and KAKI…PEKT. Residues 1464–1521 form a disordered region; the sequence is KDSNHQLQESASSDAEQITKEQFEQLKSEKERTEKELADSKNELEHLQSEAVDADGKT. Positions 1468 to 1479 are enriched in polar residues; that stretch reads HQLQESASSDAE. Residues 1480–1521 are compositionally biased toward basic and acidic residues; that stretch reads QITKEQFEQLKSEKERTEKELADSKNELEHLQSEAVDADGKT. Phosphoserine is present on Ser-1558. Thr-1560 carries the post-translational modification Phosphothreonine. A Phosphoserine modification is found at Ser-1563. Disordered regions lie at residues 1602–1642 and 1700–1837; these read EKEK…NIDD and ENLN…KKAK. The segment covering 1617–1628 has biased composition (basic and acidic residues); it reads KSQRIKELEEQA. Polar residues-rich tracts occupy residues 1700 to 1730, 1753 to 1763, 1795 to 1814, and 1827 to 1837; these read ENLN…SKPT, KSLSARLQGTG, IATS…TAKS, and GGSSSNQKKAK.

The protein localises to the cytoplasm. It localises to the nucleus. Functions as a component of the nuclear pore complex (NPC). NPC components, collectively referred to as nucleoporins (NUPs), can play the role of both NPC structural components and of docking or interaction partners for transiently associated nuclear transport factors. Active directional transport is assured by both, a Phe-Gly (FG) repeat affinity gradient for these transport factors across the NPC and a transport cofactor concentration gradient across the nuclear envelope. In Schizosaccharomyces pombe (strain 972 / ATCC 24843) (Fission yeast), this protein is Nucleoporin nup211 (nup211).